The primary structure comprises 142 residues: Transcriptional regulator MraZ (142 aa).

SpoVT-AbrB domains are found at residues 5 to 47 and 76 to 119; these read EYNH…PLGE and ANEV…SKEK.

The protein belongs to the MraZ family. Forms oligomers.

It is found in the cytoplasm. It localises to the nucleoid. The chain is Transcriptional regulator MraZ from Clostridium acetobutylicum (strain ATCC 824 / DSM 792 / JCM 1419 / IAM 19013 / LMG 5710 / NBRC 13948 / NRRL B-527 / VKM B-1787 / 2291 / W).